An 89-amino-acid polypeptide reads, in one-letter code: Small ribosomal subunit protein bS20 (89 aa).

Residues 68–89 (PNKGARKSSRLDHFVNEQKSKQ) are disordered. Basic and acidic residues predominate over residues 76–89 (SRLDHFVNEQKSKQ).

It belongs to the bacterial ribosomal protein bS20 family.

Binds directly to 16S ribosomal RNA. The polypeptide is Small ribosomal subunit protein bS20 (Mycoplasmopsis agalactiae (strain NCTC 10123 / CIP 59.7 / PG2) (Mycoplasma agalactiae)).